Reading from the N-terminus, the 637-residue chain is 1-deoxy-D-xylulose-5-phosphate synthase (637 aa).

Thiamine diphosphate-binding positions include H88 and 129–131 (GHS). D160 contacts Mg(2+). Residues 161-162 (GA), N189, F293, and E370 each bind thiamine diphosphate. Residue N189 coordinates Mg(2+).

This sequence belongs to the transketolase family. DXPS subfamily. Homodimer. Mg(2+) is required as a cofactor. It depends on thiamine diphosphate as a cofactor.

It carries out the reaction D-glyceraldehyde 3-phosphate + pyruvate + H(+) = 1-deoxy-D-xylulose 5-phosphate + CO2. Its pathway is metabolic intermediate biosynthesis; 1-deoxy-D-xylulose 5-phosphate biosynthesis; 1-deoxy-D-xylulose 5-phosphate from D-glyceraldehyde 3-phosphate and pyruvate: step 1/1. In terms of biological role, catalyzes the acyloin condensation reaction between C atoms 2 and 3 of pyruvate and glyceraldehyde 3-phosphate to yield 1-deoxy-D-xylulose-5-phosphate (DXP). The protein is 1-deoxy-D-xylulose-5-phosphate synthase of Acinetobacter baumannii (strain AYE).